The following is a 95-amino-acid chain: uncharacterized protein (95 aa).

2 tandem repeats follow at residues 67–74 (GCGCGCGC) and 85–92 (CGGCCGCG). Residues 67-92 (GCGCGCGCATVAAVSPVPCGGCCGCG) are 2 X 8 AA approximate repeats.

This is an uncharacterized protein from Caenorhabditis elegans.